Consider the following 105-residue polypeptide: uncharacterized protein (105 aa).

The next 2 helical transmembrane spans lie at 10–30 (YVVF…FKIG) and 48–68 (YPLA…YPPS).

The protein resides in the membrane. This is an uncharacterized protein from Acanthamoeba polyphaga mimivirus (APMV).